The primary structure comprises 285 residues: Bifunctional protein FolD (285 aa).

NADP(+)-binding positions include 166–168 and Ile-232; that span reads GAS.

The protein belongs to the tetrahydrofolate dehydrogenase/cyclohydrolase family. As to quaternary structure, homodimer.

It catalyses the reaction (6R)-5,10-methylene-5,6,7,8-tetrahydrofolate + NADP(+) = (6R)-5,10-methenyltetrahydrofolate + NADPH. The catalysed reaction is (6R)-5,10-methenyltetrahydrofolate + H2O = (6R)-10-formyltetrahydrofolate + H(+). Its pathway is one-carbon metabolism; tetrahydrofolate interconversion. Its function is as follows. Catalyzes the oxidation of 5,10-methylenetetrahydrofolate to 5,10-methenyltetrahydrofolate and then the hydrolysis of 5,10-methenyltetrahydrofolate to 10-formyltetrahydrofolate. This is Bifunctional protein FolD from Vibrio atlanticus (strain LGP32) (Vibrio splendidus (strain Mel32)).